The chain runs to 517 residues: Mucin-like protein 3 (517 aa).

The N-terminal stretch at 1-29 is a signal peptide; it reads MAQPVHSLCSAFGLQCCLLFLLASWGAGA. At 30 to 448 the chain is on the extracellular side; it reads TTFQEYQKTG…GENDSFPAWA (419 aa). A disordered region spans residues 67 to 341; it reads SGQRPPELPK…PTENLGNTTL (275 aa). The segment covering 83 to 93 has biased composition (basic residues); it reads QKRHCNTTRHS. N88 carries an N-linked (GlcNAc...) asparagine glycan. The span at 105-116 shows a compositional bias: basic and acidic residues; it reads TIDHKSSTDNHE. N124 is a glycosylation site (N-linked (GlcNAc...) asparagine). The segment covering 169–179 has biased composition (polar residues); that stretch reads RKSTTGKSTVT. Basic and acidic residues predominate over residues 180 to 190; that stretch reads RKSDKTGRPLE. Residues 194–213 are compositionally biased toward low complexity; sequence STLDKTSTSSHKTTTSFHNS. Composition is skewed to polar residues over residues 214–225, 232–243, and 263–283; these read GNSQTKQKSTSF, ASKTTYKTTGTP, and TKTT…QSLA. Over residues 305 to 317 the composition is skewed to basic and acidic residues; sequence TENRERTANENKK. Residue N338 is glycosylated (N-linked (GlcNAc...) asparagine). Residues 449–469 form a helical membrane-spanning segment; the sequence is IVIVVLVAVILLLVFLGLIFL. The Cytoplasmic segment spans residues 470–517; the sequence is VSYMMRTRRTLTQNTQYNDAEDEGGPNSYPVYLMEQQNLGMGQIPSPR.

As to expression, detected in lung, esophagus, stomach, rectum, skin, cervix, testis, kidney, uterus and small intestine. Expressed in pancreas (at protein level).

Its subcellular location is the cell membrane. The protein localises to the cytoplasm. Functionally, may modulate NF-kappaB signaling and play a role in cell growth. The sequence is that of Mucin-like protein 3 from Homo sapiens (Human).